The primary structure comprises 126 residues: Small ribosomal subunit protein uS12 (126 aa).

The disordered stretch occupies residues 1–26; the sequence is MPTINQLVRKGRASETTKSKSPALQD. A 3-methylthioaspartic acid modification is found at aspartate 89. Residues 102 to 126 are disordered; the sequence is LDTQGVKDRRQARSKYGAKRAKAAK. Over residues 113-126 the composition is skewed to basic residues; sequence ARSKYGAKRAKAAK.

Belongs to the universal ribosomal protein uS12 family. As to quaternary structure, part of the 30S ribosomal subunit. Contacts proteins S8 and S17. May interact with IF1 in the 30S initiation complex.

Functionally, with S4 and S5 plays an important role in translational accuracy. Interacts with and stabilizes bases of the 16S rRNA that are involved in tRNA selection in the A site and with the mRNA backbone. Located at the interface of the 30S and 50S subunits, it traverses the body of the 30S subunit contacting proteins on the other side and probably holding the rRNA structure together. The combined cluster of proteins S8, S12 and S17 appears to hold together the shoulder and platform of the 30S subunit. The protein is Small ribosomal subunit protein uS12 of Burkholderia mallei (strain ATCC 23344).